The sequence spans 205 residues: Small ribosomal subunit protein uS4 (205 aa).

The interval 18–46 (NIWGRPKSPVNRREYGPGQHGQRRKGKLS) is disordered. Residues 94–157 (RRLDTVVYRA…KQLTFVLEAN (64 aa)) enclose the S4 RNA-binding domain.

The protein belongs to the universal ribosomal protein uS4 family. As to quaternary structure, part of the 30S ribosomal subunit. Contacts protein S5. The interaction surface between S4 and S5 is involved in control of translational fidelity.

Functionally, one of the primary rRNA binding proteins, it binds directly to 16S rRNA where it nucleates assembly of the body of the 30S subunit. Its function is as follows. With S5 and S12 plays an important role in translational accuracy. The polypeptide is Small ribosomal subunit protein uS4 (Rhodopseudomonas palustris (strain BisB18)).